A 380-amino-acid polypeptide reads, in one-letter code: Cell division protein ZipA (380 aa).

Over 1-7 (MEDNFRN) the chain is Periplasmic. Residues 8 to 28 (VLIILSAIVITAIFIHGLWTL) traverse the membrane as a helical segment. Over 29–380 (RKQKNPYKLK…DRKSRIALVE (352 aa)) the chain is Cytoplasmic.

The protein belongs to the ZipA family. In terms of assembly, interacts with FtsZ via their C-terminal domains.

Its subcellular location is the cell inner membrane. Essential cell division protein that stabilizes the FtsZ protofilaments by cross-linking them and that serves as a cytoplasmic membrane anchor for the Z ring. Also required for the recruitment to the septal ring of downstream cell division proteins. This chain is Cell division protein ZipA, found in Colwellia psychrerythraea (strain 34H / ATCC BAA-681) (Vibrio psychroerythus).